The chain runs to 352 residues: N-acetyl-gamma-glutamyl-phosphate reductase (352 aa).

Residue Cys149 is part of the active site.

Belongs to the NAGSA dehydrogenase family. Type 1 subfamily.

The protein resides in the cytoplasm. The catalysed reaction is N-acetyl-L-glutamate 5-semialdehyde + phosphate + NADP(+) = N-acetyl-L-glutamyl 5-phosphate + NADPH + H(+). It functions in the pathway amino-acid biosynthesis; L-arginine biosynthesis; N(2)-acetyl-L-ornithine from L-glutamate: step 3/4. In terms of biological role, catalyzes the NADPH-dependent reduction of N-acetyl-5-glutamyl phosphate to yield N-acetyl-L-glutamate 5-semialdehyde. The protein is N-acetyl-gamma-glutamyl-phosphate reductase of Polynucleobacter asymbioticus (strain DSM 18221 / CIP 109841 / QLW-P1DMWA-1) (Polynucleobacter necessarius subsp. asymbioticus).